The following is a 495-amino-acid chain: Probable endopolygalacturonase D (495 aa).

The signal sequence occupies residues 1-16 (MKRSALLASFLPLALG). A disulfide bridge links Cys-154 with Cys-169. 3 PbH1 repeats span residues 261–283 (MYNS…EIEN), 284–322 (TEYL…DIKQ), and 323–344 (SDFL…AVTS). N-linked (GlcNAc...) asparagine glycosylation is present at Asn-295. The active-site Proton donor is Asp-337. Cys-339 and Cys-355 are oxidised to a cystine. His-359 is an active-site residue. Residue Asn-371 is glycosylated (N-linked (GlcNAc...) asparagine). 2 PbH1 repeats span residues 374 to 395 (VDGV…RIKS) and 403 to 425 (VYNV…DIQQ). 2 N-linked (GlcNAc...) asparagine glycosylation sites follow: Asn-410 and Asn-444. Disulfide bonds link Cys-464-Cys-469 and Cys-487-Cys-494. The PbH1 6 repeat unit spans residues 469–492 (CSNFVFTDVDITGGSDDSCNYPSS).

Belongs to the glycosyl hydrolase 28 family.

It is found in the secreted. The catalysed reaction is (1,4-alpha-D-galacturonosyl)n+m + H2O = (1,4-alpha-D-galacturonosyl)n + (1,4-alpha-D-galacturonosyl)m.. Functionally, involved in maceration and soft-rotting of plant tissue. Hydrolyzes the 1,4-alpha glycosidic bonds of de-esterified pectate in the smooth region of the plant cell wall. In Aspergillus niger (strain ATCC MYA-4892 / CBS 513.88 / FGSC A1513), this protein is Probable endopolygalacturonase D (pgaD).